We begin with the raw amino-acid sequence, 398 residues long: Cystathionine gamma-lyase (398 aa).

R61, Y113, and R118 together coordinate substrate. K211 bears the N6-(pyridoxal phosphate)lysine mark. E338 serves as a coordination point for substrate.

Belongs to the trans-sulfuration enzymes family. As to quaternary structure, homotetramer. Interacts with CALM in a calcium-dependent manner. Pyridoxal 5'-phosphate serves as cofactor. Detected in liver and kidney, and at lower levels in small intestine (at protein level). Highly expressed in liver, kidney and lung, detected at lower levels in stomach, small intestine and adipose tissue, and hardly found in heart, bone, and thymus.

It is found in the cytoplasm. It carries out the reaction L,L-cystathionine + H2O = 2-oxobutanoate + L-cysteine + NH4(+). The enzyme catalyses L-cysteine + H2O = hydrogen sulfide + pyruvate + NH4(+) + H(+). It catalyses the reaction L-homocysteine + H2O = 2-oxobutanoate + hydrogen sulfide + NH4(+) + H(+). The catalysed reaction is L-homoserine = 2-oxobutanoate + NH4(+). It carries out the reaction L-selenocystathionine + H2O = L-selenocysteine + 2-oxobutanoate + NH4(+). Its pathway is amino-acid biosynthesis; L-cysteine biosynthesis; L-cysteine from L-homocysteine and L-serine: step 2/2. Activated by calmodulin in the presence of calcium ions. Catalyzes the last step in the trans-sulfuration pathway from L-methionine to L-cysteine in a pyridoxal-5'-phosphate (PLP)-dependent manner, which consists on cleaving the L,L-cystathionine molecule into L-cysteine, ammonia and 2-oxobutanoate. Part of the L-cysteine derived from the trans-sulfuration pathway is utilized for biosynthesis of the ubiquitous antioxidant glutathione. Besides its role in the conversion of L-cystathionine into L-cysteine, it utilizes L-cysteine and L-homocysteine as substrates (at much lower rates than L,L-cystathionine) to produce hydrogen sulfide (H2S). In vitro, it converts two L-cysteine molecules into lanthionine and H2S, and two L-homocysteine molecules to homolanthionine and H2S, which can be particularly relevant under conditions of severe hyperhomocysteinemia. Lanthionine and homolanthionine are structural homologs of L,L-cystathionine that differ by the absence or presence of an extra methylene group, respectively. Acts as a cysteine-protein sulfhydrase by mediating sulfhydration of target proteins: sulfhydration consists of converting -SH groups into -SSH on specific cysteine residues of target proteins such as GAPDH, PTPN1 and NF-kappa-B subunit RELA, thereby regulating their function. By generating the gasotransmitter H2S, it participates in a number of physiological processes such as vasodilation, bone protection, and inflammation. Plays an essential role in myogenesis by contributing to the biogenesis of H2S in skeletal muscle tissue. Can also accept homoserine as substrate. Catalyzes the elimination of selenocystathionine (which can be derived from the diet) to yield selenocysteine, ammonia and 2-oxobutanoate. This Mus musculus (Mouse) protein is Cystathionine gamma-lyase (Cth).